The sequence spans 820 residues: Leucine--tRNA ligase (820 aa).

Residues 42 to 52 carry the 'HIGH' region motif; that stretch reads PYPSGDLHMGH. A 'KMSKS' region motif is present at residues 576 to 580; it reads KMSKS. Position 579 (Lys-579) interacts with ATP.

It belongs to the class-I aminoacyl-tRNA synthetase family.

Its subcellular location is the cytoplasm. It carries out the reaction tRNA(Leu) + L-leucine + ATP = L-leucyl-tRNA(Leu) + AMP + diphosphate. The chain is Leucine--tRNA ligase from Coxiella burnetii (strain CbuK_Q154) (Coxiella burnetii (strain Q154)).